The chain runs to 555 residues: Urocanate hydratase (555 aa).

NAD(+) contacts are provided by residues 51–52 (GG), Gln129, 175–177 (GMG), Glu195, 262–266 (QTSAH), 272–273 (YL), and Tyr321. The active site involves Cys409. Gly491 contributes to the NAD(+) binding site.

It belongs to the urocanase family. It depends on NAD(+) as a cofactor.

The protein localises to the cytoplasm. The enzyme catalyses 4-imidazolone-5-propanoate = trans-urocanate + H2O. It participates in amino-acid degradation; L-histidine degradation into L-glutamate; N-formimidoyl-L-glutamate from L-histidine: step 2/3. Its function is as follows. Catalyzes the conversion of urocanate to 4-imidazolone-5-propionate. The polypeptide is Urocanate hydratase (Xanthomonas campestris pv. campestris (strain ATCC 33913 / DSM 3586 / NCPPB 528 / LMG 568 / P 25)).